A 158-amino-acid chain; its full sequence is MSSKEAEAQKGKQGWITPTVIPPEEWGSFRYRGKTLEELLNMPMDEFIKLLPARQRRSLKRGLKPEHRKLLEKIRKAKRLMAQGKKVTIKTHCRDMIILPEMVGLTIHVYNGITYIPVFISPWHIGHYLGEFALTTRIVQHGEPGLKATRSSLHIAAK.

The protein belongs to the universal ribosomal protein uS19 family.

Protein S19 forms a complex with S13 that binds strongly to the 16S ribosomal RNA. This chain is Small ribosomal subunit protein uS19, found in Pyrobaculum calidifontis (strain DSM 21063 / JCM 11548 / VA1).